A 269-amino-acid chain; its full sequence is Transcription factor MYB7 (269 aa).

2 consecutive HTH myb-type domains span residues 9–61 and 62–116; these read KEHM…INYL and RPDL…KRKL. 2 DNA-binding regions (H-T-H motif) span residues 37–61 and 89–112; these read WRSLPRAAGLLRCGKSCRLRWINYL and WSLIAARLPGRTDNEIKNYWNTHI.

As to quaternary structure, interacts with SAD2. As to expression, expressed in anthers. Expressed in pollen grains and mature seeds. Expressed in roots and vasculature of leaves.

The protein resides in the nucleus. Transcription factor involved in the negative regulation of flavonol biosynthesis. Represses the early phenylpropanoid genes, phenylalanine ammonia-lyase (PAL), cinnamate 4-hydroxylase (C4H) and 4-coumarate-CoA ligase (4CL), as well as the flavonoid-specific genes, flavonoid 3'-hydroxylase (F3'H) and dihydroflavonol 4-reductase (DFR). Plays a role in seed germination inhibition. Negatively regulates the expression of the abscisic acid (ABA) signaling transcription factor ABI5 in seeds. The sequence is that of Transcription factor MYB7 from Arabidopsis thaliana (Mouse-ear cress).